A 394-amino-acid polypeptide reads, in one-letter code: tRNA-specific 2-thiouridylase MnmA (394 aa).

Residues 13 to 20 and methionine 39 contribute to the ATP site; that span reads GLSGGVDS. Positions 99–101 are interaction with target base in tRNA; that stretch reads NPD. Catalysis depends on cysteine 104, which acts as the Nucleophile. Cysteine 104 and cysteine 202 are disulfide-bonded. Glycine 128 is an ATP binding site. The interaction with tRNA stretch occupies residues 152-154; it reads KDQ. The Cysteine persulfide intermediate role is filled by cysteine 202. Residues 329–330 form an interaction with tRNA region; that stretch reads RY.

It belongs to the MnmA/TRMU family.

It localises to the cytoplasm. The enzyme catalyses S-sulfanyl-L-cysteinyl-[protein] + uridine(34) in tRNA + AH2 + ATP = 2-thiouridine(34) in tRNA + L-cysteinyl-[protein] + A + AMP + diphosphate + H(+). Catalyzes the 2-thiolation of uridine at the wobble position (U34) of tRNA, leading to the formation of s(2)U34. In Polaromonas naphthalenivorans (strain CJ2), this protein is tRNA-specific 2-thiouridylase MnmA.